The primary structure comprises 203 residues: Glycerol-3-phosphate acyltransferase (203 aa).

A run of 6 helical transmembrane segments spans residues 1 to 21 (MPAW…GSIP), 52 to 72 (VGKG…AAAV), 73 to 93 (ALGS…GAVI), 115 to 135 (ILLA…LLGI), 140 to 160 (IVSF…WALG), and 161 to 181 (QPLP…AAHR).

This sequence belongs to the PlsY family. Probably interacts with PlsX.

Its subcellular location is the cell inner membrane. The enzyme catalyses an acyl phosphate + sn-glycerol 3-phosphate = a 1-acyl-sn-glycero-3-phosphate + phosphate. The protein operates within lipid metabolism; phospholipid metabolism. In terms of biological role, catalyzes the transfer of an acyl group from acyl-phosphate (acyl-PO(4)) to glycerol-3-phosphate (G3P) to form lysophosphatidic acid (LPA). This enzyme utilizes acyl-phosphate as fatty acyl donor, but not acyl-CoA or acyl-ACP. The protein is Glycerol-3-phosphate acyltransferase of Synechococcus sp. (strain JA-3-3Ab) (Cyanobacteria bacterium Yellowstone A-Prime).